A 597-amino-acid polypeptide reads, in one-letter code: Aspartate--tRNA(Asp/Asn) ligase (597 aa).

E182 provides a ligand contact to L-aspartate. An aspartate region spans residues 206–209 (QLFK). R228 contributes to the L-aspartate binding site. ATP contacts are provided by residues 228-230 (RDE) and Q237. Residue H455 participates in L-aspartate binding. E489 is an ATP binding site. Residue R496 participates in L-aspartate binding. ATP is bound at residue 541–544 (GFDR).

The protein belongs to the class-II aminoacyl-tRNA synthetase family. Type 1 subfamily. In terms of assembly, homodimer.

The protein localises to the cytoplasm. It carries out the reaction tRNA(Asx) + L-aspartate + ATP = L-aspartyl-tRNA(Asx) + AMP + diphosphate. Aspartyl-tRNA synthetase with relaxed tRNA specificity since it is able to aspartylate not only its cognate tRNA(Asp) but also tRNA(Asn). Reaction proceeds in two steps: L-aspartate is first activated by ATP to form Asp-AMP and then transferred to the acceptor end of tRNA(Asp/Asn). In Desulfosudis oleivorans (strain DSM 6200 / JCM 39069 / Hxd3) (Desulfococcus oleovorans), this protein is Aspartate--tRNA(Asp/Asn) ligase.